The chain runs to 449 residues: Glucose-6-phosphate isomerase (449 aa).

Glu-291 (proton donor) is an active-site residue. Active-site residues include His-312 and Lys-426.

This sequence belongs to the GPI family.

The protein resides in the cytoplasm. It carries out the reaction alpha-D-glucose 6-phosphate = beta-D-fructose 6-phosphate. It participates in carbohydrate biosynthesis; gluconeogenesis. The protein operates within carbohydrate degradation; glycolysis; D-glyceraldehyde 3-phosphate and glycerone phosphate from D-glucose: step 2/4. Its function is as follows. Catalyzes the reversible isomerization of glucose-6-phosphate to fructose-6-phosphate. This is Glucose-6-phosphate isomerase from Streptococcus gordonii (strain Challis / ATCC 35105 / BCRC 15272 / CH1 / DL1 / V288).